Here is a 285-residue protein sequence, read N- to C-terminus: (3S)-malyl-CoA thioesterase (285 aa).

Arg-70 and Glu-122 together coordinate substrate. The Mg(2+) site is built by Glu-122 and Asp-148.

This sequence belongs to the HpcH/HpaI aldolase family. Homodimer or homotrimer. Mg(2+) is required as a cofactor.

It carries out the reaction (S)-malyl-CoA + H2O = (S)-malate + CoA + H(+). Catalyzes the hydrolysis of (3S)-malyl-CoA to (3S)-malate and free CoA. Inactive towards beta-methylmalyl-CoA and other CoA esters. The sequence is that of (3S)-malyl-CoA thioesterase from Cereibacter sphaeroides (strain ATCC 17025 / ATH 2.4.3) (Rhodobacter sphaeroides).